Here is a 347-residue protein sequence, read N- to C-terminus: Cytosolic sulfotransferase 14 (347 aa).

87–92 (KSGTTW) lines the 3'-phosphoadenylyl sulfate pocket. Catalysis depends on His-155, which acts as the Proton acceptor. Residues Arg-177, Ser-185, Tyr-244, and 310–312 (RKG) each bind 3'-phosphoadenylyl sulfate.

The protein belongs to the sulfotransferase 1 family.

Its subcellular location is the cytoplasm. Functionally, sulfotransferase that utilizes 3'-phospho-5'-adenylyl sulfate (PAPS) as sulfonate donor. Not active with 11-hydroxyjasmonate or 12-hydroxyjasmonate. The protein is Cytosolic sulfotransferase 14 (SOT14) of Arabidopsis thaliana (Mouse-ear cress).